A 444-amino-acid chain; its full sequence is Deoxyguanosinetriphosphate triphosphohydrolase-like protein (444 aa).

The disordered stretch occupies residues 1–28 (MTDAVWNERRLGEDKQRRNDHRSPYQRD). One can recognise an HD domain in the interval 59-250 (RLTHSLEVSQ…MELADDIAYA (192 aa)).

This sequence belongs to the dGTPase family. Type 2 subfamily.

In Shewanella pealeana (strain ATCC 700345 / ANG-SQ1), this protein is Deoxyguanosinetriphosphate triphosphohydrolase-like protein.